Reading from the N-terminus, the 356-residue chain is Protein-glutamate methylesterase/protein-glutamine glutaminase 3 (356 aa).

The Response regulatory domain maps to 3-120 (KVAIVDDSAV…KGFLEESQAR (118 aa)). Position 54 is a 4-aspartylphosphate (aspartate 54). A CheB-type methylesterase domain is found at 165-356 (NQTTDRVVAL…AEEIIAFTKQ (192 aa)). Active-site residues include serine 177, histidine 203, and aspartate 299.

This sequence belongs to the CheB family. Phosphorylated by CheA. Phosphorylation of the N-terminal regulatory domain activates the methylesterase activity.

It localises to the cytoplasm. It carries out the reaction [protein]-L-glutamate 5-O-methyl ester + H2O = L-glutamyl-[protein] + methanol + H(+). The enzyme catalyses L-glutaminyl-[protein] + H2O = L-glutamyl-[protein] + NH4(+). Involved in chemotaxis. Part of a chemotaxis signal transduction system that modulates chemotaxis in response to various stimuli. Catalyzes the demethylation of specific methylglutamate residues introduced into the chemoreceptors (methyl-accepting chemotaxis proteins or MCP) by CheR. Also mediates the irreversible deamidation of specific glutamine residues to glutamic acid. In Shewanella oneidensis (strain ATCC 700550 / JCM 31522 / CIP 106686 / LMG 19005 / NCIMB 14063 / MR-1), this protein is Protein-glutamate methylesterase/protein-glutamine glutaminase 3.